The chain runs to 245 residues: tRNA pseudouridine synthase A (245 aa).

D52 functions as the Nucleophile in the catalytic mechanism. Residue Y111 coordinates substrate.

The protein belongs to the tRNA pseudouridine synthase TruA family. As to quaternary structure, homodimer.

It catalyses the reaction uridine(38/39/40) in tRNA = pseudouridine(38/39/40) in tRNA. Its function is as follows. Formation of pseudouridine at positions 38, 39 and 40 in the anticodon stem and loop of transfer RNAs. The chain is tRNA pseudouridine synthase A from Rickettsia prowazekii (strain Madrid E).